A 145-amino-acid chain; its full sequence is Acidic phospholipase A2 1 (145 aa).

Residues 1–21 form the signal peptide; sequence MYPAHLLVLLAVCVSLLGATA. Positions 22–27 are excised as a propeptide; that stretch reads IPPLPL. Intrachain disulfides connect C38–C98, C54–C144, C56–C72, C71–C125, C78–C118, C87–C111, and C105–C116. Y55, G57, and G59 together coordinate Ca(2+). H75 is an active-site residue. D76 is a binding site for Ca(2+). Residue D119 is part of the active site.

Belongs to the phospholipase A2 family. Group I subfamily. D49 sub-subfamily. In terms of assembly, monomer. Ca(2+) serves as cofactor. Expressed by the venom gland.

Its subcellular location is the secreted. It catalyses the reaction a 1,2-diacyl-sn-glycero-3-phosphocholine + H2O = a 1-acyl-sn-glycero-3-phosphocholine + a fatty acid + H(+). Functionally, PLA2 catalyzes the calcium-dependent hydrolysis of the 2-acyl groups in 3-sn-phosphoglycerides. This is Acidic phospholipase A2 1 from Laticauda semifasciata (Black-banded sea krait).